Here is a 169-residue protein sequence, read N- to C-terminus: E1B protein, small T-antigen (169 aa).

Belongs to the adenoviridae E1B 19 kDa protein family.

The protein is E1B protein, small T-antigen of Canis lupus familiaris (Dog).